A 621-amino-acid polypeptide reads, in one-letter code: Chaperone protein HscA homolog (621 aa).

The protein belongs to the heat shock protein 70 family.

In terms of biological role, chaperone involved in the maturation of iron-sulfur cluster-containing proteins. Has a low intrinsic ATPase activity which is markedly stimulated by HscB. The polypeptide is Chaperone protein HscA homolog (Polynucleobacter necessarius subsp. necessarius (strain STIR1)).